The sequence spans 53 residues: uncharacterized protein (53 aa).

The chain crosses the membrane as a helical span at residues 20–42 (ILFPVLLVFDTILIVVGIALILF).

The protein resides in the membrane. This is an uncharacterized protein from Archaeoglobus fulgidus (strain ATCC 49558 / DSM 4304 / JCM 9628 / NBRC 100126 / VC-16).